A 438-amino-acid polypeptide reads, in one-letter code: Serine hydroxymethyltransferase (438 aa).

133-135 (GHI) serves as a coordination point for (6S)-5,6,7,8-tetrahydrofolate. Lys-239 bears the N6-(pyridoxal phosphate)lysine mark.

Belongs to the SHMT family. Homodimer. Pyridoxal 5'-phosphate is required as a cofactor.

Its subcellular location is the cytoplasm. The enzyme catalyses 5,10-methylenetetrahydromethanopterin + glycine + H2O = 5,6,7,8-tetrahydromethanopterin + L-serine. Its pathway is amino-acid biosynthesis; glycine biosynthesis; glycine from L-serine: step 1/1. Functionally, catalyzes the reversible interconversion of serine and glycine with tetrahydromethanopterin (H4MPT) serving as the one-carbon carrier. Also exhibits a pteridine-independent aldolase activity toward beta-hydroxyamino acids, producing glycine and aldehydes, via a retro-aldol mechanism. The polypeptide is Serine hydroxymethyltransferase (Archaeoglobus fulgidus (strain ATCC 49558 / DSM 4304 / JCM 9628 / NBRC 100126 / VC-16)).